Consider the following 364-residue polypeptide: Spermatogenesis-associated protein 22 (364 aa).

Composition is skewed to polar residues over residues 1–13, 30–48, 73–108, 137–169, and 177–189; these read MKRN…TRST, QPLT…NASD, KTVN…SKSD, LMTN…LPNQ, and QTKS…STMR. 2 disordered regions span residues 1-51 and 70-189; these read MKRN…DNYD and PLTK…STMR.

As to quaternary structure, component of a multiprotein complex with MEIOB and RPA2. Interacts with MEIOB. Interacts with the complex BRME1:HSF2BP:BRCA2.

The protein resides in the chromosome. Meiosis-specific protein required for homologous recombination in meiosis I. In Bos taurus (Bovine), this protein is Spermatogenesis-associated protein 22 (SPATA22).